Reading from the N-terminus, the 111-residue chain is Cell division topological specificity factor (111 aa).

This sequence belongs to the MinE family.

Prevents the cell division inhibition by proteins MinC and MinD at internal division sites while permitting inhibition at polar sites. This ensures cell division at the proper site by restricting the formation of a division septum at the midpoint of the long axis of the cell. This is Cell division topological specificity factor from Prochlorococcus marinus (strain MIT 9312).